Here is a 287-residue protein sequence, read N- to C-terminus: Shikimate dehydrogenase (NADP(+)) (287 aa).

Residues 20-22 (SRS) and threonine 67 each bind shikimate. Residue lysine 71 is the Proton acceptor of the active site. Glutamate 84 contacts NADP(+). Residues asparagine 93 and aspartate 108 each coordinate shikimate. NADP(+) is bound by residues 132-136 (GAGGA), 156-161 (NRTAAR), and methionine 226. Tyrosine 228 serves as a coordination point for shikimate. Residue glycine 250 participates in NADP(+) binding.

It belongs to the shikimate dehydrogenase family. Homodimer.

The catalysed reaction is shikimate + NADP(+) = 3-dehydroshikimate + NADPH + H(+). It functions in the pathway metabolic intermediate biosynthesis; chorismate biosynthesis; chorismate from D-erythrose 4-phosphate and phosphoenolpyruvate: step 4/7. In terms of biological role, involved in the biosynthesis of the chorismate, which leads to the biosynthesis of aromatic amino acids. Catalyzes the reversible NADPH linked reduction of 3-dehydroshikimate (DHSA) to yield shikimate (SA). The polypeptide is Shikimate dehydrogenase (NADP(+)) (Bordetella bronchiseptica (strain ATCC BAA-588 / NCTC 13252 / RB50) (Alcaligenes bronchisepticus)).